Consider the following 362-residue polypeptide: Putative transport protein BB_0006 (362 aa).

8 consecutive transmembrane segments (helical) span residues F20–F40, L43–F63, F68–F88, E144–S164, I212–L232, F234–T254, I265–E285, and L304–V326.

This sequence belongs to the autoinducer-2 exporter (AI-2E) (TC 2.A.86) family.

It is found in the cell membrane. This Borreliella burgdorferi (strain ATCC 35210 / DSM 4680 / CIP 102532 / B31) (Borrelia burgdorferi) protein is Putative transport protein BB_0006.